Reading from the N-terminus, the 144-residue chain is Large ribosomal subunit protein uL11 (144 aa).

The protein belongs to the universal ribosomal protein uL11 family. As to quaternary structure, part of the ribosomal stalk of the 50S ribosomal subunit. Interacts with L10 and the large rRNA to form the base of the stalk. L10 forms an elongated spine to which L12 dimers bind in a sequential fashion forming a multimeric L10(L12)X complex. One or more lysine residues are methylated.

Functionally, forms part of the ribosomal stalk which helps the ribosome interact with GTP-bound translation factors. The protein is Large ribosomal subunit protein uL11 of Neisseria meningitidis serogroup B (strain ATCC BAA-335 / MC58).